The following is a 312-amino-acid chain: Ubiquinone biosynthesis protein COQ9, mitochondrial (312 aa).

Residues 1 to 45 (MAATAAVSGVLRRLGWRLLQLRCLPVARCQSPLMPRAFHTAVGFR) constitute a mitochondrion transit peptide. The SIFI-degron motif lies at 17–32 (RLLQLRCLPVARCQSP). A disordered region spans residues 43-92 (GFRSSEEQRQQPPHSSQQHSETQGPEFSRPPPRYTDQSGEEEEDYESEEQ). Residues 52-63 (QQPPHSSQQHSE) are compositionally biased toward low complexity. Ser80 bears the Phosphoserine mark. Positions 80–91 (SGEEEEDYESEE) are enriched in acidic residues. Lys169 carries the post-translational modification N6-acetyllysine. Arg238 is a binding site for a 1,2-diacylglycero-3-phosphoethanolamine.

It belongs to the COQ9 family. Homodimer. Heterodimer; two heterodimers of COQ7:COQ9 come together on the same side of the lipid pseudo-bilayer and form a curved tetramer with a hydrophobic surface suitable for membrane interaction. These two tetramers assemble into a soluble octamer with a pseudo-bilayer of lipids captured within. Interacts with COQ7; this interaction allows ubiquinone (CoQ) isoprene intermediates presentation to COQ7 and facilitates the COQ7-mediated hydroxylase step. Post-translationally, in response to mitochondrial stress, the precursor protein is ubiquitinated by the SIFI complex in the cytoplasm before mitochondrial import, leading to its degradation. Within the SIFI complex, UBR4 initiates ubiquitin chain that are further elongated or branched by KCMF1.

The protein resides in the mitochondrion. Its pathway is cofactor biosynthesis; ubiquinone biosynthesis. Functionally, membrane-associated protein that warps the membrane surface to access and bind aromatic isoprenes with high specificity, including ubiquinone (CoQ) isoprene intermediates and presents them directly to COQ7, therefore facilitating the COQ7-mediated hydroxylase step. Participates in the biosynthesis of coenzyme Q, also named ubiquinone, an essential lipid-soluble electron transporter for aerobic cellular respiration. This chain is Ubiquinone biosynthesis protein COQ9, mitochondrial, found in Rattus norvegicus (Rat).